The following is an 857-amino-acid chain: Envelope glycoprotein gp160 (857 aa).

An N-terminal signal peptide occupies residues 1 to 26; it reads MAHTSNHLFILLLLISVYGFLGHKKN. Residues 27–682 are Extracellular-facing; sequence YVTVFYGIPA…FTSWMAYIRL (656 aa). N-linked (GlcNAc...) asparagine; by host glycosylation is present at N39. A disulfide bridge connects residues C46 and C59. Residues N72, N81, N116, N121, N142, N150, N167, N193, N205, N237, N240, N271, N277, N288, N299, N309, N364, N397, N407, N447, N464, and N469 are each glycosylated (N-linked (GlcNAc...) asparagine; by host). 5 disulfides stabilise this stretch: C103-C213, C110-C204, C115-C164, C226-C256, and C236-C248. Positions 115–163 are V1; sequence CNNTGTNTTTKPITTPITTTKPSENLLNDTSPCIKNDTCPGIGLENTVD. The tract at residues 164–204 is V2; the sequence is CYFNMTGLRRDEKKQYKDTWYEKDLECNGNSTSTICYMRTC. Residues 304 to 336 are V3; it reads CRRPGNKTVIPITIMSGLNFHSQPLNTRPRQAW. Cysteines 304 and 337 form a disulfide. Intrachain disulfides connect C389–C446 and C396–C419. The tract at residues 396 to 419 is V4; sequence CNMTWFLNWVENRTGTTQKNYVTC. Residues 464-472 are V5; that stretch reads NDTKTNITM. A fusion peptide region spans residues 515 to 535; sequence GVMVLGFLGLLAMAGSAMGAT. Positions 578 to 594 are immunosuppression; the sequence is LQTRVTAIEKYLKDQAL. Residues N614, N623, and N639 are each glycosylated (N-linked (GlcNAc...) asparagine; by host). The stretch at 627 to 648 forms a coiled coil; sequence QQWEKRVNFLDANITALLEEAQ. The tract at residues 660–681 is MPER; binding to GalCer; sequence KLNSWDVFGNWFDFTSWMAYIR. A helical transmembrane segment spans residues 683-703; that stretch reads GLYVVAGLIVLRIVIYIMQML. At 704 to 857 the chain is on the cytoplasmic side; sequence ARLRKGYRPV…IRQGLELALL (154 aa). Positions 710-713 match the YXXV motif; contains endocytosis signal motif; it reads YRPV. C776 carries the S-palmitoyl cysteine; by host lipid modification. Residues 856 to 857 carry the Di-leucine internalization motif motif; that stretch reads LL.

As to quaternary structure, the mature envelope protein (Env) consists of a homotrimer of non-covalently associated gp120-gp41 heterodimers. The resulting complex protrudes from the virus surface as a spike. There seems to be as few as 10 spikes on the average virion. Interacts with human CD4, CCR5 and CXCR4, to form a P4HB/PDI-CD4-CXCR4-gp120 complex. Gp120 also interacts with the C-type lectins CD209/DC-SIGN and CLEC4M/DC-SIGNR (collectively referred to as DC-SIGN(R)). Gp120 and gp41 interact with GalCer. In terms of assembly, the mature envelope protein (Env) consists of a homotrimer of non-covalently associated gp120-gp41 heterodimers. The resulting complex protrudes from the virus surface as a spike. There seems to be as few as 10 spikes on the average virion. Specific enzymatic cleavages in vivo yield mature proteins. Envelope glycoproteins are synthesized as an inactive precursor that is heavily N-glycosylated and processed likely by host cell furin in the Golgi to yield the mature SU and TM proteins. The cleavage site between SU and TM requires the minimal sequence [KR]-X-[KR]-R. Post-translationally, palmitoylation of the transmembrane protein and of Env polyprotein (prior to its proteolytic cleavage) is essential for their association with host cell membrane lipid rafts. Palmitoylation is therefore required for envelope trafficking to classical lipid rafts, but not for viral replication.

It localises to the virion membrane. It is found in the host cell membrane. The protein resides in the host endosome membrane. Its function is as follows. The surface protein gp120 (SU) attaches the virus to the host lymphoid cell by binding to the primary receptor CD4. This interaction induces a structural rearrangement creating a high affinity binding site for a chemokine coreceptor like CXCR4 and/or CCR5. This peculiar 2 stage receptor-interaction strategy allows gp120 to maintain the highly conserved coreceptor-binding site in a cryptic conformation, protected from neutralizing antibodies. Since CD4 also displays a binding site for the disulfide-isomerase P4HB/PDI, a P4HB/PDI-CD4-CXCR4-gp120 complex may form. In that complex, P4HB/PDI could reach and reduce gp120 disulfide bonds, causing major conformational changes in gp120. TXN, another PDI family member could also be involved in disulfide rearrangements in Env during fusion. These changes are transmitted to the transmembrane protein gp41 and are thought to activate its fusogenic potential by unmasking its fusion peptide. Functionally, the surface protein gp120 is a ligand for CD209/DC-SIGN and CLEC4M/DC-SIGNR, which are respectively found on dendritic cells (DCs), and on endothelial cells of liver sinusoids and lymph node sinuses. These interactions allow capture of viral particles at mucosal surfaces by these cells and subsequent transmission to permissive cells. DCs are professional antigen presenting cells, critical for host immunity by inducing specific immune responses against a broad variety of pathogens. They act as sentinels in various tissues where they take up antigen, process it, and present it to T-cells following migration to lymphoid organs. HIV subverts the migration properties of dendritic cells to gain access to CD4+ T-cells in lymph nodes. Virus transmission to permissive T-cells occurs either in trans (without DCs infection, through viral capture and transmission), or in cis (following DCs productive infection, through the usual CD4-gp120 interaction), thereby inducing a robust infection. In trans infection, bound virions remain infectious over days and it is proposed that they are not degraded, but protected in non-lysosomal acidic organelles within the DCs close to the cell membrane thus contributing to the viral infectious potential during DCs' migration from the periphery to the lymphoid tissues. On arrival at lymphoid tissues, intact virions recycle back to DCs' cell surface allowing virus transmission to CD4+ T-cells. Virion capture also seems to lead to MHC-II-restricted viral antigen presentation, and probably to the activation of HIV-specific CD4+ cells. In terms of biological role, the transmembrane protein gp41 (TM) acts as a class I viral fusion protein. Under the current model, the protein has at least 3 conformational states: pre-fusion native state, pre-hairpin intermediate state, and post-fusion hairpin state. During fusion of viral and target intracellular membranes, the coiled coil regions (heptad repeats) assume a trimer-of-hairpins structure, positioning the fusion peptide in close proximity to the C-terminal region of the ectodomain. The formation of this structure appears to drive apposition and subsequent fusion of viral and target cell membranes. Complete fusion occurs in host cell endosomes and is dynamin-dependent, however some lipid transfer might occur at the plasma membrane. The virus undergoes clathrin-dependent internalization long before endosomal fusion, thus minimizing the surface exposure of conserved viral epitopes during fusion and reducing the efficacy of inhibitors targeting these epitopes. Membranes fusion leads to delivery of the nucleocapsid into the cytoplasm. The envelope glycoprotein gp160 precursor down-modulates cell surface CD4 antigen by interacting with it in the endoplasmic reticulum and blocking its transport to the cell surface. Its function is as follows. The gp120-gp41 heterodimer seems to contribute to T-cell depletion during HIV-1 infection. The envelope glycoproteins expressed on the surface of infected cells induce apoptosis through an interaction with uninfected cells expressing the receptor (CD4) and the coreceptors CXCR4 or CCR5. This type of bystander killing may be obtained by at least three distinct mechanisms. First, the interaction between the 2 cells can induce cellular fusion followed by nuclear fusion within the syncytium. Syncytia are condemned to die from apoptosis. Second, the 2 interacting cells may not fuse entirely and simply exchange plasma membrane lipids, after a sort of hemifusion process, followed by rapid death. Third, it is possible that virus-infected cells, on the point of undergoing apoptosis, fuse with CD4-expressing cells, in which case apoptosis is rapidly transmitted from one cell to the other and thus occurs in a sort of contagious fashion. Functionally, the gp120-gp41 heterodimer allows rapid transcytosis of the virus through CD4 negative cells such as simple epithelial monolayers of the intestinal, rectal and endocervical epithelial barriers. Both gp120 and gp41 specifically recognize glycosphingolipids galactosyl-ceramide (GalCer) or 3' sulfo-galactosyl-ceramide (GalS) present in the lipid rafts structures of epithelial cells. Binding to these alternative receptors allows the rapid transcytosis of the virus through the epithelial cells. This transcytotic vesicle-mediated transport of virions from the apical side to the basolateral side of the epithelial cells does not involve infection of the cells themselves. This chain is Envelope glycoprotein gp160 (env), found in Homo sapiens (Human).